A 529-amino-acid polypeptide reads, in one-letter code: Bifunctional purine biosynthesis protein PurH (529 aa).

The region spanning 1–148 (MQQRRPVRRA…KNHRDVAIVV (148 aa)) is the MGS-like domain. The residue at position 287 (lysine 287) is an N6-acetyllysine.

It belongs to the PurH family.

The enzyme catalyses (6R)-10-formyltetrahydrofolate + 5-amino-1-(5-phospho-beta-D-ribosyl)imidazole-4-carboxamide = 5-formamido-1-(5-phospho-D-ribosyl)imidazole-4-carboxamide + (6S)-5,6,7,8-tetrahydrofolate. The catalysed reaction is IMP + H2O = 5-formamido-1-(5-phospho-D-ribosyl)imidazole-4-carboxamide. It participates in purine metabolism; IMP biosynthesis via de novo pathway; 5-formamido-1-(5-phospho-D-ribosyl)imidazole-4-carboxamide from 5-amino-1-(5-phospho-D-ribosyl)imidazole-4-carboxamide (10-formyl THF route): step 1/1. It functions in the pathway purine metabolism; IMP biosynthesis via de novo pathway; IMP from 5-formamido-1-(5-phospho-D-ribosyl)imidazole-4-carboxamide: step 1/1. The protein is Bifunctional purine biosynthesis protein PurH of Escherichia coli O6:K15:H31 (strain 536 / UPEC).